A 474-amino-acid chain; its full sequence is tRNA-2-methylthio-N(6)-dimethylallyladenosine synthase (474 aa).

The MTTase N-terminal domain occupies 3-120 (KKLLIKTWGC…LPEMIKQSQS (118 aa)). Positions 12, 49, 83, 157, 161, and 164 each coordinate [4Fe-4S] cluster. A Radical SAM core domain is found at 143-375 (RAEGATAFVS…QQQINAQAMR (233 aa)). The 64-residue stretch at 378 to 441 (RLMLGTEQRV…ANSLRGEIVR (64 aa)) folds into the TRAM domain.

It belongs to the methylthiotransferase family. MiaB subfamily. As to quaternary structure, monomer. [4Fe-4S] cluster serves as cofactor.

The protein resides in the cytoplasm. The catalysed reaction is N(6)-dimethylallyladenosine(37) in tRNA + (sulfur carrier)-SH + AH2 + 2 S-adenosyl-L-methionine = 2-methylsulfanyl-N(6)-dimethylallyladenosine(37) in tRNA + (sulfur carrier)-H + 5'-deoxyadenosine + L-methionine + A + S-adenosyl-L-homocysteine + 2 H(+). Catalyzes the methylthiolation of N6-(dimethylallyl)adenosine (i(6)A), leading to the formation of 2-methylthio-N6-(dimethylallyl)adenosine (ms(2)i(6)A) at position 37 in tRNAs that read codons beginning with uridine. In Vibrio vulnificus (strain YJ016), this protein is tRNA-2-methylthio-N(6)-dimethylallyladenosine synthase.